The following is a 207-amino-acid chain: Octanoyltransferase (207 aa).

The BPL/LPL catalytic domain maps to 27-203 (ADTEDELWVV…HLETQFTPKA (177 aa)). Residues 66-73 (RGGQITYH), 133-135 (SLG), and 146-148 (GLA) contribute to the substrate site. Cys164 acts as the Acyl-thioester intermediate in catalysis.

Belongs to the LipB family.

It is found in the cytoplasm. The catalysed reaction is octanoyl-[ACP] + L-lysyl-[protein] = N(6)-octanoyl-L-lysyl-[protein] + holo-[ACP] + H(+). The protein operates within protein modification; protein lipoylation via endogenous pathway; protein N(6)-(lipoyl)lysine from octanoyl-[acyl-carrier-protein]: step 1/2. Catalyzes the transfer of endogenously produced octanoic acid from octanoyl-acyl-carrier-protein onto the lipoyl domains of lipoate-dependent enzymes. Lipoyl-ACP can also act as a substrate although octanoyl-ACP is likely to be the physiological substrate. The sequence is that of Octanoyltransferase from Neisseria meningitidis serogroup B (strain ATCC BAA-335 / MC58).